The chain runs to 153 residues: Ribonuclease H (153 aa).

The 141-residue stretch at 1-141 folds into the RNase H type-1 domain; the sequence is MKLVEIFTDG…CDELAKAGAN (141 aa). Asp9, Glu47, Asp69, and Asp133 together coordinate Mg(2+).

Belongs to the RNase H family. Monomer. The cofactor is Mg(2+).

The protein localises to the cytoplasm. The catalysed reaction is Endonucleolytic cleavage to 5'-phosphomonoester.. Its function is as follows. Endonuclease that specifically degrades the RNA of RNA-DNA hybrids. This is Ribonuclease H from Actinobacillus pleuropneumoniae serotype 5b (strain L20).